Consider the following 46-residue polypeptide: Protein PsbN (46 aa).

Residues 10–30 (VSIAVLTALLGLTGFGIYTAF) form a helical membrane-spanning segment.

The protein belongs to the PsbN family.

The protein resides in the cellular thylakoid membrane. Functionally, may play a role in photosystem I and II biogenesis. This chain is Protein PsbN, found in Synechococcus sp. (strain RCC307).